A 309-amino-acid chain; its full sequence is Glycine-rich RNA-binding protein 3, mitochondrial (309 aa).

The transit peptide at 1 to 37 (MAFLSKFGNILKQTTNKQLNAQVSLSSPSLFQAIRCM) directs the protein to the mitochondrion. In terms of domain architecture, RRM spans 40-118 (SKLFIGGMAY…RVVKVNYAND (79 aa)). The segment at 247–309 (FAGDSQFGGS…GEFEDVAKRA (63 aa)) is disordered. Polar residues predominate over residues 258-273 (VGNSSQFGGDNTQFTA).

The protein belongs to the GR-RBP family. Homodimer. Interacts with ORRM2 and MORF8/RIP1. Interacts with RBG5/ORRM4. Binds to RBG2/ORRM5.

The protein localises to the mitochondrion. Possibly has a role in RNA transcription or processing during stress. Involved in C-to-U editing of mitochondrial RNA. Functions as a minor mitochondrial editing factor. Controls 6 percent of the mitochondrial editing sites. The polypeptide is Glycine-rich RNA-binding protein 3, mitochondrial (Arabidopsis thaliana (Mouse-ear cress)).